Reading from the N-terminus, the 382-residue chain is Calcium/calmodulin-dependent protein kinase (382 aa).

The 256-residue stretch at 23–278 folds into the Protein kinase domain; sequence YKFGRTLGAG…SKEALGHIWL (256 aa). ATP contacts are provided by residues 29 to 37 and Lys-50; that span reads LGAGTYGVV. Asp-142 (proton acceptor) is an active-site residue. Residues 291–301 form a calmodulin-binding region; the sequence is ELEAYRRRARL. Disordered stretches follow at residues 318–344 and 359–382; these read KEHE…GDGS and QKQE…FSNA.

This sequence belongs to the protein kinase superfamily. CAMK Ser/Thr protein kinase family. CaMK subfamily.

It carries out the reaction L-seryl-[protein] + ATP = O-phospho-L-seryl-[protein] + ADP + H(+). The enzyme catalyses L-threonyl-[protein] + ATP = O-phospho-L-threonyl-[protein] + ADP + H(+). The chain is Calcium/calmodulin-dependent protein kinase from Metarhizium anisopliae (Entomophthora anisopliae).